We begin with the raw amino-acid sequence, 59 residues long: UPF0509 protein KPN78578_12530 (59 aa).

The protein belongs to the UPF0509 family.

This chain is UPF0509 protein KPN78578_12530, found in Klebsiella pneumoniae subsp. pneumoniae (strain ATCC 700721 / MGH 78578).